The following is a 396-amino-acid chain: Formate-dependent phosphoribosylglycinamide formyltransferase (396 aa).

Residues 25–26 (EL) and Glu-85 each bind N(1)-(5-phospho-beta-D-ribosyl)glycinamide. ATP-binding positions include Arg-117, Lys-158, 163–168 (SSGKGQ), 198–201 (EAFI), and Glu-206. One can recognise an ATP-grasp domain in the interval 122–311 (RLAAETLAIP…EFALHVRAIL (190 aa)). Mg(2+) is bound by residues Glu-270 and Glu-282. Residues Asp-289, Lys-359, and 366–367 (RR) contribute to the N(1)-(5-phospho-beta-D-ribosyl)glycinamide site.

This sequence belongs to the PurK/PurT family. In terms of assembly, homodimer.

It carries out the reaction N(1)-(5-phospho-beta-D-ribosyl)glycinamide + formate + ATP = N(2)-formyl-N(1)-(5-phospho-beta-D-ribosyl)glycinamide + ADP + phosphate + H(+). The protein operates within purine metabolism; IMP biosynthesis via de novo pathway; N(2)-formyl-N(1)-(5-phospho-D-ribosyl)glycinamide from N(1)-(5-phospho-D-ribosyl)glycinamide (formate route): step 1/1. In terms of biological role, involved in the de novo purine biosynthesis. Catalyzes the transfer of formate to 5-phospho-ribosyl-glycinamide (GAR), producing 5-phospho-ribosyl-N-formylglycinamide (FGAR). Formate is provided by PurU via hydrolysis of 10-formyl-tetrahydrofolate. The sequence is that of Formate-dependent phosphoribosylglycinamide formyltransferase from Shewanella frigidimarina (strain NCIMB 400).